The chain runs to 122 residues: Large ribosomal subunit protein bL12 (122 aa).

This sequence belongs to the bacterial ribosomal protein bL12 family. In terms of assembly, homodimer. Part of the ribosomal stalk of the 50S ribosomal subunit. Forms a multimeric L10(L12)X complex, where L10 forms an elongated spine to which 2 to 4 L12 dimers bind in a sequential fashion. Binds GTP-bound translation factors.

Its function is as follows. Forms part of the ribosomal stalk which helps the ribosome interact with GTP-bound translation factors. Is thus essential for accurate translation. The polypeptide is Large ribosomal subunit protein bL12 (Vibrio parahaemolyticus serotype O3:K6 (strain RIMD 2210633)).